Reading from the N-terminus, the 374-residue chain is Gustatory receptor 23a (374 aa).

Residues 1–6 (MFPPTR) lie on the Cytoplasmic side of the membrane. A helical transmembrane segment spans residues 7–27 (VQASSRVVLKIFHFILVAFSL). Residues 28–36 (RSRRLSRLV) are Extracellular-facing. A helical membrane pass occupies residues 37–57 (LWLQFLGWLTWFISMWTQSVI). Residues 58-72 (YAQTIDCTLDCSLRH) lie on the Cytoplasmic side of the membrane. The helical transmembrane segment at 73–93 (ILTFFQTVSHAFIVVTSFLDG) threads the bilayer. Topologically, residues 94 to 112 (FRIKQDQLDEPIAFEDSDP) are extracellular. The helical transmembrane segment at 113–133 (WLAFTVLAMLVPTLGVEYLVC) threads the bilayer. Residues 134–226 (SNAPEYAFRI…YNDLHYLFVR (93 aa)) are Cytoplasmic-facing. A helical transmembrane segment spans residues 227-247 (INGYFGGSLLTIIIVHFAIFV). Topologically, residues 248 to 263 (SNSYWLFVDIRTRPWR) are extracellular. A helical membrane pass occupies residues 264–284 (IYAILLNLGFIFNVALQMAAA). The Cytoplasmic portion of the chain corresponds to 285 to 343 (CWHCQQSYNLGRQIGCLISKLVKPQGSKLYNDLVSEFSLQTLHQRFVVTAKDFFSLNLH). A helical membrane pass occupies residues 344-364 (LLSSMFAAVVTYLVILIQFMF). The Extracellular portion of the chain corresponds to 365–374 (AERSSTRGSG).

The protein belongs to the insect chemoreceptor superfamily. Gustatory receptor (GR) family. Gr2a subfamily. In terms of tissue distribution, expressed in the adult labellar chemosensory neurons and labral sense organ. Expressed in neurons of the dorsal pharyngeal sense organ of larvae.

Its subcellular location is the cell membrane. Functionally, probable gustatory receptor which mediates acceptance or avoidance behavior, depending on its substrates. In Drosophila melanogaster (Fruit fly), this protein is Gustatory receptor 23a (Gr23a).